The chain runs to 285 residues: Putative pyruvate, phosphate dikinase regulatory protein (285 aa).

165–172 (GVSRTSKT) lines the ADP pocket.

Belongs to the pyruvate, phosphate/water dikinase regulatory protein family. PDRP subfamily.

The catalysed reaction is N(tele)-phospho-L-histidyl/L-threonyl-[pyruvate, phosphate dikinase] + ADP = N(tele)-phospho-L-histidyl/O-phospho-L-threonyl-[pyruvate, phosphate dikinase] + AMP + H(+). It catalyses the reaction N(tele)-phospho-L-histidyl/O-phospho-L-threonyl-[pyruvate, phosphate dikinase] + phosphate + H(+) = N(tele)-phospho-L-histidyl/L-threonyl-[pyruvate, phosphate dikinase] + diphosphate. Functionally, bifunctional serine/threonine kinase and phosphorylase involved in the regulation of the pyruvate, phosphate dikinase (PPDK) by catalyzing its phosphorylation/dephosphorylation. The sequence is that of Putative pyruvate, phosphate dikinase regulatory protein from Lactobacillus delbrueckii subsp. bulgaricus (strain ATCC BAA-365 / Lb-18).